The sequence spans 170 residues: E1B protein, small T-antigen (170 aa).

This sequence belongs to the adenoviridae E1B 19 kDa protein family.

The chain is E1B protein, small T-antigen from Canine adenovirus serotype 2 (CAdV-2).